A 592-amino-acid chain; its full sequence is Probable tubulin polyglutamylase TTLL2 (592 aa).

Disordered stretches follow at residues 1–23 and 51–77; these read MRGRDLCSSTQSQALGSLRTTTP and GVSIPPRRGRPTPTLEKKKKPHLMAED. The span at 7 to 23 shows a compositional bias: polar residues; it reads CSSTQSQALGSLRTTTP. The 344-residue stretch at 84–427 folds into the TTL domain; the sequence is LKPLVFRVDE…NGLRNEGREA (344 aa). Residues lysine 212, 218–219, 240–243, and 253–255 each bind ATP; these read RG, QKYI, and KCD. Arginine 218 provides a ligand contact to a protein. Arginine 279 contributes to the L-glutamate binding site. Position 298–299 (298–299) interacts with ATP; that stretch reads TN. Positions 301 and 321 each coordinate L-glutamate. 3 residues coordinate Mg(2+): aspartate 373, glutamate 386, and asparagine 388. Residue lysine 404 coordinates L-glutamate.

The protein belongs to the tubulin--tyrosine ligase family. The cofactor is Mg(2+). As to expression, testis.

Its function is as follows. Probable tubulin polyglutamylase that generates side chains of glutamate on the gamma-carboxyl group of specific glutamate residues within the C-terminal tail of target proteins. Similar to TTLL1, may acquire enzymatic activity only in complex with other proteins as it is most likely lacking domains important for autonomous activity. Probably involved in the side-chain initiation step of the polyglutamylation reaction rather than the elongation step. This Homo sapiens (Human) protein is Probable tubulin polyglutamylase TTLL2.